The sequence spans 202 residues: Small ribosomal subunit protein uS5 (202 aa).

One can recognise an S5 DRBM domain in the interval 46 to 109 (LKSEVLSVGF…RRAKLNIVPV (64 aa)).

This sequence belongs to the universal ribosomal protein uS5 family. In terms of assembly, part of the 30S ribosomal subunit. Contacts protein S4.

With S4 and S12 plays an important role in translational accuracy. The protein is Small ribosomal subunit protein uS5 of Thermofilum pendens (strain DSM 2475 / Hrk 5).